The primary structure comprises 247 residues: Protein FAM133B (247 aa).

Disordered regions lie at residues 19 to 38 (SRGPIQSSGPTIQDYLNRPR) and 70 to 247 (KKEL…PDSP). A compositionally biased stretch (basic and acidic residues) spans 70–80 (KKELEKHREKL). Ser-82 bears the Phosphoserine mark. The segment covering 89–102 (KKRQRKKKEKKKSG) has biased composition (basic residues). Over residues 103–119 (RYSSSSSSSSDSSSSSS) the composition is skewed to low complexity. Positions 128 to 140 (QGKRRKKKKNRSH) are enriched in basic residues. Positions 165–176 (KDGTEKEKDIKG) are enriched in basic and acidic residues. Ser-191, Ser-192, Ser-194, and Ser-196 each carry phosphoserine. Basic and acidic residues predominate over residues 211-221 (SSEEREKATEK). Basic residues predominate over residues 222 to 239 (TKKKKKHKKHSKKKKKKA).

It belongs to the FAM133 family.

The polypeptide is Protein FAM133B (FAM133B) (Homo sapiens (Human)).